Reading from the N-terminus, the 782-residue chain is uncharacterized protein (782 aa).

Positions 22–50 (CRECHRLKLKCDRVWPCENCKKRGIPNLC) form a DNA-binding region, zn(2)-C6 fungal-type. Disordered stretches follow at residues 105-126 (GEKP…DPDH) and 645-665 (VPSS…AEKA). The segment covering 654 to 665 (SPDDSSMRAEKA) has biased composition (basic and acidic residues).

The protein localises to the nucleus. This is an uncharacterized protein from Schizosaccharomyces pombe (strain 972 / ATCC 24843) (Fission yeast).